The primary structure comprises 645 residues: MSNRKQARLEAKRFIDTLSVEPYPNSQKSYLLGSRPDIRVPVREITLSDTLVGGSKDAPIFEPNEPICVYDTSGVYTDPSHDIDLYKGLPKLREEWIEERRDTHILPSMSSHFARERLADETLDELRYGHLPRIRRAMGQHRVTQLHYARQGIITPEMEFVAIRENSRRLAHQDPSLLQQHAGQNFGAHLPDLITPEFVRREIAEGRAIIPCNINHPESEPMIIGRNFLVKVNANIGNSSVSSSIEEEVEKLVWATRWGADTVMDLSTGRNIHETREWILRNSPVPIGTVPMYQALEKVNGVAENLTWEVMRDTLLEQAEQGVDYFTIHAGLLLRYVPMTAKRVTGIVSRGGSIIAKWCLSHHQENFLYTHFREICEICAQYDVALSLGDGLRPGSIADANDEAQFAELRTLGELTQIAWEYDVQVMIEGPGHVPMHLIKANMDEQLKHCHEAPFYTLGPLTTDIAPGYDHITSGIGAAMIGWFGCAMLCYVTPKEHLGLPNKEDVKTGLITYKLAAHAADLAKGHPGAQIRDNALSKARFEFRWEDQFNLALDPVTARAFHDETLPQESGKVAHFCSMCGPKFCSMKISQEVRDYANNQTLDTTVIDLVMPAESIQLAMQDKSREFLASGAELYHPLVKEPIEE.

Residues N235, M264, Y293, H329, 349-351 (SRG), 390-393 (DGLR), and E429 each bind substrate. H433 contributes to the Zn(2+) binding site. Substrate is bound at residue Y456. H497 is a Zn(2+) binding site. 3 residues coordinate [4Fe-4S] cluster: C577, C580, and C585.

It belongs to the ThiC family. Homodimer. Requires [4Fe-4S] cluster as cofactor.

It carries out the reaction 5-amino-1-(5-phospho-beta-D-ribosyl)imidazole + S-adenosyl-L-methionine = 4-amino-2-methyl-5-(phosphooxymethyl)pyrimidine + CO + 5'-deoxyadenosine + formate + L-methionine + 3 H(+). The protein operates within cofactor biosynthesis; thiamine diphosphate biosynthesis. In terms of biological role, catalyzes the synthesis of the hydroxymethylpyrimidine phosphate (HMP-P) moiety of thiamine from aminoimidazole ribotide (AIR) in a radical S-adenosyl-L-methionine (SAM)-dependent reaction. The polypeptide is Phosphomethylpyrimidine synthase (Vibrio cholerae serotype O1 (strain ATCC 39541 / Classical Ogawa 395 / O395)).